The chain runs to 438 residues: 23S rRNA (uracil(1939)-C(5))-methyltransferase RlmD (438 aa).

The 60-residue stretch at lysine 10 to lysine 69 folds into the TRAM domain. Residues cysteine 82, cysteine 88, cysteine 91, and cysteine 169 each coordinate [4Fe-4S] cluster. S-adenosyl-L-methionine is bound by residues glutamine 272, phenylalanine 301, asparagine 306, glutamate 322, asparagine 349, and aspartate 370. Cysteine 396 (nucleophile) is an active-site residue.

This sequence belongs to the class I-like SAM-binding methyltransferase superfamily. RNA M5U methyltransferase family. RlmD subfamily.

It carries out the reaction uridine(1939) in 23S rRNA + S-adenosyl-L-methionine = 5-methyluridine(1939) in 23S rRNA + S-adenosyl-L-homocysteine + H(+). In terms of biological role, catalyzes the formation of 5-methyl-uridine at position 1939 (m5U1939) in 23S rRNA. The chain is 23S rRNA (uracil(1939)-C(5))-methyltransferase RlmD from Aliivibrio salmonicida (strain LFI1238) (Vibrio salmonicida (strain LFI1238)).